We begin with the raw amino-acid sequence, 191 residues long: MEYFDMRKMSVNLWRNAAGETREICTFPPAKRDFYWRASIASIAANGEFSLFPGMERIVTLLEGGEMLLESADRFNHTLKPLQPFAFAADQVVKAKLTAGQMSMDFNIMTRLDVCKAKVRIAERTFTTFGSRGGVVFVINGAWQLGDKLLTTDQGACWFDGRHTLRLLQPQGKLLFSEINWLAGHSPDQVQ.

Belongs to the Ves family.

This Escherichia coli O8 (strain IAI1) protein is Protein Ves.